Here is a 348-residue protein sequence, read N- to C-terminus: Type II methyltransferase M.BglI (348 aa).

It belongs to the N(4)/N(6)-methyltransferase family.

The enzyme catalyses a 2'-deoxycytidine in DNA + S-adenosyl-L-methionine = an N(4)-methyl-2'-deoxycytidine in DNA + S-adenosyl-L-homocysteine + H(+). Functionally, a beta subtype methylase, recognizes the double-stranded sequence 5'-GCCNNNNNGGC-3', methylates C-2 on both strands, and protects the DNA from cleavage by the BglI endonuclease. The polypeptide is Type II methyltransferase M.BglI (bglIM) (Bacillus subtilis).